Here is a 261-residue protein sequence, read N- to C-terminus: Short chain dehydrogenase/reductase astE (261 aa).

Residues isoleucine 24, aspartate 70, asparagine 97, and lysine 131 each contribute to the NADP(+) site. Catalysis depends on proton donor residues serine 150 and tyrosine 164. Residues tyrosine 164, lysine 168, valine 197, and threonine 199 each coordinate NADP(+). Lysine 168 functions as the Lowers pKa of active site Tyr in the catalytic mechanism.

The protein belongs to the short-chain dehydrogenases/reductases (SDR) family.

Its pathway is secondary metabolite biosynthesis; terpenoid biosynthesis. Functionally, short chain dehydrogenase/reductase; part of the gene cluster that mediates the biosynthesis of astellolides, drimane-type sesquiterpene esters that show antimicrobial, anti-inflammatory, and anti-tumor activities. The first step in astellolide biosynthesis is performed by the sesquiterpene cyclase astC that catalyzes the formation of drimanyl pyrophosphate from farnesyl pyrophosphate. Drimanyl pyrophosphate is then dephosphorylated by the sesquiterpene phosphatase astI to produce drimanyl monophosphate which is further dephosphorylated to drim-8-ene-11-ol by atsK. Drim-8-ene-11-ol is converted to confertifolin, probably by the cytochrome P450 monooxygenase astD and/or the dehydrogenase astE. The cytochrome P450 monooxygenases astB, astF and astJ then hydroxylate confertifolin at C6, C14, or C15 to form trihydroxy confertifolin. The nonribosomal peptide synthetase astA catalyzes ester bond formation between trihydroxy contifolin and benzoic acid (BA) or 4-hydroxy benzoic acid (4HBA), leading to the formation of dideacetyl astellolides A and B, respectively. Finally, the O-acetyltransferase astG converts dideacetyl astellolides A and B into deacetyl astellolides A and B. In Aspergillus oryzae (strain ATCC 42149 / RIB 40) (Yellow koji mold), this protein is Short chain dehydrogenase/reductase astE.